The following is a 192-amino-acid chain: Large ribosomal subunit protein bL25 (192 aa).

The protein belongs to the bacterial ribosomal protein bL25 family. CTC subfamily. As to quaternary structure, part of the 50S ribosomal subunit; part of the 5S rRNA/L5/L18/L25 subcomplex. Contacts the 5S rRNA. Binds to the 5S rRNA independently of L5 and L18.

Its function is as follows. This is one of the proteins that binds to the 5S RNA in the ribosome where it forms part of the central protuberance. This Cytophaga hutchinsonii (strain ATCC 33406 / DSM 1761 / CIP 103989 / NBRC 15051 / NCIMB 9469 / D465) protein is Large ribosomal subunit protein bL25.